The following is a 687-amino-acid chain: Adhesion G-protein coupled receptor G1 (687 aa).

The N-terminal stretch at 1–25 is a signal peptide; it reads MTAQSLLQMTLFLLSLLFLVQGAHG. Residue 26–33 participates in heparin binding; it reads RGHREDFR. The Extracellular portion of the chain corresponds to 26–402; it reads RGHREDFRFC…VEVDAVHKHY (377 aa). 2 disulfide bridges follow: cysteine 35/cysteine 91 and cysteine 121/cysteine 177. N-linked (GlcNAc...) asparagine glycosylation is found at asparagine 39, asparagine 148, and asparagine 171. 190-200 serves as a coordination point for heparin; that stretch reads LKHPQKASRRP. In terms of domain architecture, GAIN-B spans 224–395; the sequence is DTVSFEEDRI…AVLMVSSVEV (172 aa). N-linked (GlcNAc...) asparagine glycosylation is found at asparagine 234, asparagine 303, asparagine 324, and asparagine 341. Cystine bridges form between cysteine 346–cysteine 377 and cysteine 366–cysteine 379. Residues 346–395 form a GPS region; the sequence is CVFWVEDPTLSSPGHWSSAGCETVRRETQTSCFCNHLTYFAVLMVSSVEV. Positions 384-397 are stachel; sequence YFAVLMVSSVEVDA. The helical transmembrane segment at 403–423 threads the bilayer; sequence LSLLSYVGCVISALACVVTIA. The Cytoplasmic segment spans residues 424 to 442; the sequence is AYLCSRRKPRDYTIKVHMN. A helical membrane pass occupies residues 443 to 463; that stretch reads LLLAVFLLDMSFLLSEPVALT. Topologically, residues 464-470 are extracellular; sequence GSEAGCR. A helical membrane pass occupies residues 471–491; the sequence is AGAIFLHFSLLACLSWMGLEG. Topologically, residues 492–512 are cytoplasmic; it reads YNLYRLVVEVFGTYVPGYLLK. Residues 513–533 traverse the membrane as a helical segment; sequence LSAMGWGFPIFLVTLVALVDV. Residues 534-570 are Extracellular-facing; it reads DNYGPIILAVHRTPESVIYPSMCWIRDSLVSYVTNLG. A helical membrane pass occupies residues 571 to 591; it reads LFSLVFLFNMAMLGTMVVQIL. At 592 to 603 the chain is on the cytoplasmic side; the sequence is RLRPHTQKWSHV. Residues 604-624 form a helical membrane-spanning segment; sequence LTLLGLSLVLGLPWALIFFSF. Residues 625-630 lie on the Extracellular side of the membrane; the sequence is ASGTFQ. A helical transmembrane segment spans residues 631 to 651; that stretch reads LVVLYLFSIITSFQGFLIFIW. The Cytoplasmic segment spans residues 652–687; it reads YWSMRLQARGGPSPLKSNSDSARLPISSGSTSSSRI. Residues 664–687 are disordered; the sequence is SPLKSNSDSARLPISSGSTSSSRI. The span at 678 to 687 shows a compositional bias: low complexity; the sequence is SSGSTSSSRI.

The protein belongs to the G-protein coupled receptor 2 family. LN-TM7 subfamily. Heterodimer of 2 chains generated by proteolytic processing; the large extracellular N-terminal fragment (ADGRG1 NT) and the membrane-bound C-terminal fragment (ADGRG1-CT) predominantly remain associated and non-covalently linked. ADGRG1 NT self-associates in a trans-trans manner; the homophilic interaction enhances receptor signaling. Interacts with TGM2. Interacts with heparin; leading to the reduction of ADGRG1 shedding. Interacts with COL3A1. Part of a GPCR-tetraspanin complex at least consisting of ADGRG1, CD81, eventually CD9, and GNA11 in which CD81 is enhancing the association of ADGRG1 with GNA11. Autoproteolytically cleaved into 2 fragments; the large extracellular N-terminal fragment (ADGRG1 NT) and the membrane-bound C-terminal fragment (ADGRG1 CT) predominantly remain associated and non-covalently linked. Shedding to yield the secreted ADGRG1 N-terminal fragment seems to involve metalloprotease(s). Post-translationally, ubiquitinated. Undergoes polyubiquitination upon activation.

It localises to the cell membrane. The protein localises to the secreted. The protein resides in the membrane raft. Forms a heterodimer of 2 chains generated by proteolytic processing that remain associated through non-covalent interactions mediated by the GAIN-B domain. In the inactivated receptor, the Stachel sequence (also named stalk) is embedded in the GAIN-B domain, where it adopts a beta-strand conformation. On activation, the Stachel moves into the 7 transmembrane region and adopts a twisted hook-shaped configuration that forms contacts within the receptor, leading to coupling of a G-alpha protein, which activates signaling. The cleaved GAIN-B and N-terminal domains can then dissociate from the rest of the receptor. In terms of biological role, adhesion G-protein coupled receptor (aGPCR) for steroid hormone 17alpha-hydroxypregnenolone (17-OH), which is involved in cell adhesion and cell-cell interactions. Ligand binding causes a conformation change that triggers signaling via guanine nucleotide-binding proteins (G proteins) and modulates the activity of downstream effectors, such as RhoA pathway. ADGRG1 is coupled to G(12) and/or G(13) G proteins (GNA12 and GNA13, respectively) and mediates the activation Rho small GTPases. Acts as a potent suppressor of ferroptosis: binding to 17-OH-binding initiates signaling that down-regulates CD36 and alleviates ferroptosis-induced liver injury. Ligand-binding also induces cell adhesion activity via association with proteins such as collagen III/COL3A1 and TGM2. Mediates cell matrix adhesion in developing neurons and hematopoietic stem cells. Involved in cortical development, specifically in maintenance of the pial basement membrane integrity and in cortical lamination: association with COL3A1 in the developing brain inhibits neuronal migration via activation of the RhoA pathway. Together with TGM2, acts as a regulator of myelination and myelin repair in oligodendrocyte precursor cells. Acts as a hemostatic sensor of shear force: G protein-coupled receptor signaling is activated in response to shear force in platelets, promoting G(13) G protein signaling, and platelet shape change and aggregation in a COL3A1-dependent manner. Acts as an inhibitor of VEGFA production thereby inhibiting angiogenesis through a signaling pathway mediated by PRKCA. Plays a role in the maintenance of hematopoietic stem cells in bone marrow niche. Plays an essential role in testis development. This is Adhesion G-protein coupled receptor G1 (ADGRG1) from Pongo pygmaeus (Bornean orangutan).